The sequence spans 483 residues: Probable cytochrome P450 517A4 (483 aa).

Residues 1–21 (MEIVNVLLFLIILFLVKDFVK) form a helical membrane-spanning segment. Cys-429 is a heme binding site.

It belongs to the cytochrome P450 family. Heme is required as a cofactor.

The protein resides in the membrane. This chain is Probable cytochrome P450 517A4 (cyp517A4), found in Dictyostelium discoideum (Social amoeba).